Here is a 457-residue protein sequence, read N- to C-terminus: Chromosomal replication initiator protein DnaA (457 aa).

Positions 1–90 (MAVSLWQQCI…RPSAKPQAPA (90 aa)) are domain I, interacts with DnaA modulators. Residues 79–120 (GSRPSAKPQAPAPAAVKAAAPQPKPGNSFVSQPEPAVSNHRS) form a disordered region. The span at 84–99 (AKPQAPAPAAVKAAAP) shows a compositional bias: low complexity. The tract at residues 91–120 (PAAVKAAAPQPKPGNSFVSQPEPAVSNHRS) is domain II. Residues 121–337 (NINPTYQFDN…GALNRVIANA (217 aa)) are domain III, AAA+ region. The ATP site is built by G165, G167, K168, and T169. Residues 338–457 (NFTGRPITID…YANLIRTLSS (120 aa)) form a domain IV, binds dsDNA region.

The protein belongs to the DnaA family. As to quaternary structure, oligomerizes as a right-handed, spiral filament on DNA at oriC.

The protein resides in the cytoplasm. Its function is as follows. Plays an essential role in the initiation and regulation of chromosomal replication. ATP-DnaA binds to the origin of replication (oriC) to initiate formation of the DNA replication initiation complex once per cell cycle. Binds the DnaA box (a 9 base pair repeat at the origin) and separates the double-stranded (ds)DNA. Forms a right-handed helical filament on oriC DNA; dsDNA binds to the exterior of the filament while single-stranded (ss)DNA is stabiized in the filament's interior. The ATP-DnaA-oriC complex binds and stabilizes one strand of the AT-rich DNA unwinding element (DUE), permitting loading of DNA polymerase. After initiation quickly degrades to an ADP-DnaA complex that is not apt for DNA replication. Binds acidic phospholipids. This is Chromosomal replication initiator protein DnaA from Shewanella amazonensis (strain ATCC BAA-1098 / SB2B).